The sequence spans 368 residues: RNA polymerase sigma factor SigA (368 aa).

The disordered stretch occupies residues 69–90 (LVNEKDSSDTDEKLNPSDLSAP). Positions 71–83 (NEKDSSDTDEKLN) are enriched in basic and acidic residues. The tract at residues 135–205 (LAEANLRLVV…TRAIADQART (71 aa)) is sigma-70 factor domain-2. The Interaction with polymerase core subunit RpoC signature appears at 159–162 (DLIQ). Residues 214–290 (ETINKLIRVQ…DQEAQSPSDH (77 aa)) are sigma-70 factor domain-3. A sigma-70 factor domain-4 region spans residues 303-356 (VLDTLTDREENVLRLRFGLDDGRTRTLEEVGKVFGVTRERIRQIEAKALRKLRH). Positions 329 to 348 (LEEVGKVFGVTRERIRQIEA) form a DNA-binding region, H-T-H motif.

Belongs to the sigma-70 factor family. RpoD/SigA subfamily. Interacts transiently with the RNA polymerase catalytic core.

The protein resides in the cytoplasm. In terms of biological role, sigma factors are initiation factors that promote the attachment of RNA polymerase to specific initiation sites and are then released. This sigma factor is the primary sigma factor during exponential growth. The sequence is that of RNA polymerase sigma factor SigA from Staphylococcus aureus (strain N315).